We begin with the raw amino-acid sequence, 162 residues long: NADH-quinone oxidoreductase subunit I 1 (162 aa).

2 consecutive 4Fe-4S ferredoxin-type domains span residues 44-74 (LRTY…VQAA) and 90-119 (YKYQ…LTQE). [4Fe-4S] cluster is bound by residues cysteine 54, cysteine 57, cysteine 60, cysteine 64, cysteine 99, cysteine 102, cysteine 105, and cysteine 109.

Belongs to the complex I 23 kDa subunit family. In terms of assembly, NDH-1 is composed of 14 different subunits. Subunits NuoA, H, J, K, L, M, N constitute the membrane sector of the complex. [4Fe-4S] cluster is required as a cofactor.

Its subcellular location is the cell membrane. It carries out the reaction a quinone + NADH + 5 H(+)(in) = a quinol + NAD(+) + 4 H(+)(out). In terms of biological role, NDH-1 shuttles electrons from NADH, via FMN and iron-sulfur (Fe-S) centers, to quinones in the respiratory chain. The immediate electron acceptor for the enzyme in this species is believed to be ubiquinone. Couples the redox reaction to proton translocation (for every two electrons transferred, four hydrogen ions are translocated across the cytoplasmic membrane), and thus conserves the redox energy in a proton gradient. The sequence is that of NADH-quinone oxidoreductase subunit I 1 from Symbiobacterium thermophilum (strain DSM 24528 / JCM 14929 / IAM 14863 / T).